The sequence spans 166 residues: Plastocyanin, chloroplastic (166 aa).

A chloroplast-targeting transit peptide spans 1 to 67 (MASLTSAAVT…GAVLASNALA (67 aa)). The 99-residue stretch at 68–166 (VEVLLGGSDG…AGMAGKITVN (99 aa)) folds into the Plastocyanin-like domain. Cu cation-binding residues include histidine 104, cysteine 151, histidine 154, and methionine 159.

It belongs to the plastocyanin family. Requires Cu(2+) as cofactor.

Its subcellular location is the plastid. It localises to the chloroplast thylakoid membrane. Participates in electron transfer between P700 and the cytochrome b6-f complex in photosystem I. This chain is Plastocyanin, chloroplastic (PETE), found in Fritillaria agrestis (Stinkbells).